Consider the following 213-residue polypeptide: Endonuclease III (213 aa).

The HhH domain occupies 108–127 (FKELIKLPGVGRKTANVVLN). Positions 187, 194, 197, and 203 each coordinate [4Fe-4S] cluster.

This sequence belongs to the Nth/MutY family. It depends on [4Fe-4S] cluster as a cofactor.

The enzyme catalyses 2'-deoxyribonucleotide-(2'-deoxyribose 5'-phosphate)-2'-deoxyribonucleotide-DNA = a 3'-end 2'-deoxyribonucleotide-(2,3-dehydro-2,3-deoxyribose 5'-phosphate)-DNA + a 5'-end 5'-phospho-2'-deoxyribonucleoside-DNA + H(+). Its function is as follows. DNA repair enzyme that has both DNA N-glycosylase activity and AP-lyase activity. The DNA N-glycosylase activity releases various damaged pyrimidines from DNA by cleaving the N-glycosidic bond, leaving an AP (apurinic/apyrimidinic) site. The AP-lyase activity cleaves the phosphodiester bond 3' to the AP site by a beta-elimination, leaving a 3'-terminal unsaturated sugar and a product with a terminal 5'-phosphate. This is Endonuclease III from Rickettsia felis (strain ATCC VR-1525 / URRWXCal2) (Rickettsia azadi).